We begin with the raw amino-acid sequence, 483 residues long: Probable cytochrome P450 517A4 (483 aa).

The chain crosses the membrane as a helical span at residues 1 to 21; the sequence is MEIVNVLLFLIILFLVKDFVK. Cys429 contributes to the heme binding site.

It belongs to the cytochrome P450 family. It depends on heme as a cofactor.

It localises to the membrane. The protein is Probable cytochrome P450 517A4 (cyp517A4) of Dictyostelium discoideum (Social amoeba).